A 220-amino-acid polypeptide reads, in one-letter code: Large ribosomal subunit protein uL16 (220 aa).

The protein belongs to the universal ribosomal protein uL16 family. Component of the small ribosomal subunit. Mature ribosomes consist of a small (40S) and a large (60S) subunit. The 40S subunit contains about 33 different proteins and 1 molecule of RNA (18S). The 60S subunit contains about 49 different proteins and 3 molecules of RNA (25S, 5.8S and 5S).

This chain is Large ribosomal subunit protein uL16 (RPL10), found in Zea mays (Maize).